Reading from the N-terminus, the 293-residue chain is MAQHYKTIGLIGKPNHDGASATIQTLHKYLLANEYKVIVEVSVAQSLDIKKMKTGTLTDIGEQADLAIVIGGDGYMLGAARVLACFDIGVIGVNRGNLGFLTDLSPSEIIKPLEQILSGKSRSEQRFIIEAEVYRHGKLKSSNSAVNEAVLHAGKVASMIEFEVYIDGTFMFSQRSDGLIISTPTGSTAYSMSAGGPILTPNLNALSLVPMFPHTLTSRPIVVDGNSEIKLILANDNHENLQVSCDGHVILTVMPGDEVIIKKSECSIRLIHPLDHEYFNVLRNKLSWGNKLY.

Asp-73 serves as the catalytic Proton acceptor. Residues 73-74, 147-148, Arg-175, Asp-177, and 188-193 contribute to the NAD(+) site; these read DG, NE, and TAYSMS.

Belongs to the NAD kinase family. Requires a divalent metal cation as cofactor.

The protein resides in the cytoplasm. It catalyses the reaction NAD(+) + ATP = ADP + NADP(+) + H(+). Involved in the regulation of the intracellular balance of NAD and NADP, and is a key enzyme in the biosynthesis of NADP. Catalyzes specifically the phosphorylation on 2'-hydroxyl of the adenosine moiety of NAD to yield NADP. The polypeptide is NAD kinase (Colwellia psychrerythraea (strain 34H / ATCC BAA-681) (Vibrio psychroerythus)).